A 173-amino-acid polypeptide reads, in one-letter code: Transcriptional regulator ERG homolog (173 aa).

The ETS DNA-binding region spans 1 to 84 (SGQIQLWQFL…HGKRYAYKFD (84 aa)).

The protein belongs to the ETS family.

It localises to the nucleus. Its function is as follows. Acts as a transcriptional activator. The polypeptide is Transcriptional regulator ERG homolog (ERG) (Lytechinus variegatus (Green sea urchin)).